The primary structure comprises 625 residues: Interferon-induced GTP-binding protein MxE (625 aa).

Positions 40–313 constitute a Dynamin-type G domain; it reads DLNLPAIAVI…LVEHIAKNLP (274 aa). The interval 50-57 is G1 motif; sequence GDQSSGKS. 50–57 contributes to the GTP binding site; that stretch reads GDQSSGKS. The interval 75-77 is G2 motif; it reads VTR. The tract at residues 151-154 is G3 motif; that stretch reads DLPG. GTP-binding positions include 151 to 155 and 220 to 223; these read DLPGI and TKPD. Residues 220–223 are G4 motif; it reads TKPD. The tract at residues 252–255 is G5 motif; it reads KCRG. The region spanning 536-625 is the GED domain; sequence VREMAYHLTS…RVLSKFVHSA (90 aa).

Belongs to the TRAFAC class dynamin-like GTPase superfamily. Dynamin/Fzo/YdjA family.

It is found in the cytoplasm. In Danio rerio (Zebrafish), this protein is Interferon-induced GTP-binding protein MxE (mxe).